A 660-amino-acid chain; its full sequence is Acyl-coenzyme A oxidase acox-1.3 (660 aa).

FAD-binding positions include Y146–T149, G154–T155, and G188. Substrate-binding positions include K282 to Y285 and R292. Residues R317 and Q337–R340 each bind FAD. H339, S389, H393, and Q401 together coordinate ATP. Y430–E431 contributes to the substrate binding site. E431 functions as the Proton acceptor in the catalytic mechanism. E433 lines the FAD pocket. Residues R524 to R527 and Y572 each bind ATP. The short motif at A658 to L660 is the Microbody targeting signal element.

The protein belongs to the acyl-CoA oxidase family. In terms of assembly, forms a heterodimer with acox-1.1; the interaction may be important for the stability of acox-1.3. It depends on FAD as a cofactor.

It is found in the peroxisome. The catalysed reaction is asc-C7-CoA + O2 = asc-DeltaC7-CoA + H2O2. The protein operates within lipid metabolism; peroxisomal fatty acid beta-oxidation. With respect to regulation, activated by ATP. ATP binding leads to a conformational change that promotes FAD cofactor binding and enzyme activity. ATP binding likely occurs during acox-1.3 folding and/or dimer formation. Its function is as follows. Involved in the first step of peroxisomal beta-oxidation by catalyzing the desaturation of fatty acid-derived side chains of ascaroside pheromones, which regulates development and behavior. Specifically, shortens ascarosides with a 7-carbon side chain (asc-C7). Does not catalyze the desaturation of fatty acids or hydroxylated fatty acids. Involved in the biosynthesis of asc-C6-MK (daumone 2) and asc-delta-C9 (daumone 3) but not asc-C7 (daumone 1); daumones are pheromones produced during unfavourable growth conditions which promote entry into the dauer stage. This chain is Acyl-coenzyme A oxidase acox-1.3, found in Caenorhabditis elegans.